The sequence spans 24 residues: Bombinin (24 aa).

Residue Asn-24 is modified to Asparagine amide.

Belongs to the bombinin family. As to expression, expressed by the skin glands.

It is found in the secreted. Has antimicrobial and hemolytic activities. This is Bombinin from Bombina variegata (Yellow-bellied toad).